Here is a 283-residue protein sequence, read N- to C-terminus: uncharacterized protein (283 aa).

Polar residues predominate over residues 1-10; sequence MELNKTSESL. 2 disordered regions span residues 1–99 and 255–283; these read MELN…NPTS and DQEG…EAHI. Composition is skewed to basic and acidic residues over residues 14–34, 42–53, and 61–71; these read KIDH…REVR, SSTRQEKADRMP, and ESSKGSEEGAV.

The protein belongs to the chlamydial CPn_0705/CT_671/TC_0042 family.

This is an uncharacterized protein from Chlamydia trachomatis serovar D (strain ATCC VR-885 / DSM 19411 / UW-3/Cx).